The primary structure comprises 521 residues: Ankyrin repeat domain-containing protein 34B (521 aa).

4 ANK repeats span residues 9–38 (TESN…YINE), 42–79 (RGET…DPNI), 83–113 (FGKT…DPSL), and 117–146 (TGFS…AKGK). Positions 161–188 (QTTRQYLNVPPSPGIEGNNSPSPCTSPS) are disordered. The span at 177–188 (GNNSPSPCTSPS) shows a compositional bias: polar residues.

This sequence belongs to the ANKRD34 family.

Its subcellular location is the cytoplasm. It is found in the nucleus. This is Ankyrin repeat domain-containing protein 34B (ankrd34b) from Xenopus laevis (African clawed frog).